Consider the following 193-residue polypeptide: Ribosomal RNA large subunit methyltransferase E (193 aa).

Positions 49, 51, 69, 86, and 106 each coordinate S-adenosyl-L-methionine. Lys146 serves as the catalytic Proton acceptor.

This sequence belongs to the class I-like SAM-binding methyltransferase superfamily. RNA methyltransferase RlmE family.

It localises to the cytoplasm. The catalysed reaction is uridine(2552) in 23S rRNA + S-adenosyl-L-methionine = 2'-O-methyluridine(2552) in 23S rRNA + S-adenosyl-L-homocysteine + H(+). Its function is as follows. Specifically methylates the uridine in position 2552 of 23S rRNA at the 2'-O position of the ribose in the fully assembled 50S ribosomal subunit. This is Ribosomal RNA large subunit methyltransferase E from Brachyspira hyodysenteriae (strain ATCC 49526 / WA1).